A 1051-amino-acid chain; its full sequence is Ubiquitin carboxyl-terminal hydrolase 28 (1051 aa).

The disordered stretch occupies residues 60–82; it reads DQRVKEPSHDTTAAEPSEVEESA. Ser67 carries the phosphoserine modification. Residues 97 to 116 form the UIM domain; sequence DNKDDLQAAIALSLLESPNI. Lys99 participates in a covalent cross-link: Glycyl lysine isopeptide (Lys-Gly) (interchain with G-Cter in SUMO2). The segment covering 121–135 has biased composition (basic and acidic residues); the sequence is RDLNRAHEANSAETK. The disordered stretch occupies residues 121–140; the sequence is RDLNRAHEANSAETKRSKRK. Residues 162–655 form the USP domain; sequence VGLKNVGNTC…SAYCLMYIND (494 aa). The Nucleophile role is filled by Cys171. The residue at position 376 (Ser376) is a Phosphoserine. Residues 483-538 are disordered; the sequence is DLTPKESSSPESCSQNAGSTFSSPEDALPSSEGMNGPFTSPHSSLETPAPPAPRTV. Composition is skewed to polar residues over residues 487–505 and 519–528; these read KESS…TFSS and PFTSPHSSLE. The residue at position 555 (Ser555) is a Phosphoserine. The active-site Proton acceptor is His605. The tract at residues 703–735 is disordered; that stretch reads EEQSCKIPQMESSPNSSSQDFSTSQESPAVSSH. A compositionally biased stretch (low complexity) spans 713–730; sequence ESSPNSSSQDFSTSQESP. Ser720 is modified (phosphoserine). Phosphothreonine is present on Thr1022.

It belongs to the peptidase C19 family. USP28 subfamily. Interacts with ZNF304. Interacts with PRKD1. Interacts with TP53BP1. Interacts with FBXW7; following DNA damage, dissociates from FBXW7 leading to degradation of MYC. In terms of processing, degraded upon nickel ion level or hypoxia exposure. Post-translationally, phosphorylated upon DNA damage at Ser-67 and Ser-720, by ATM or ATR. Phosphorylated by PRKD1.

It is found in the nucleus. It localises to the nucleoplasm. The catalysed reaction is Thiol-dependent hydrolysis of ester, thioester, amide, peptide and isopeptide bonds formed by the C-terminal Gly of ubiquitin (a 76-residue protein attached to proteins as an intracellular targeting signal).. Deubiquitinase involved in DNA damage response checkpoint and MYC proto-oncogene stability. Involved in DNA damage induced apoptosis by specifically deubiquitinating proteins of the DNA damage pathway such as CLSPN. Also involved in G2 DNA damage checkpoint, by deubiquitinating CLSPN, and preventing its degradation by the anaphase promoting complex/cyclosome (APC/C). In contrast, it does not deubiquitinate PLK1. Specifically deubiquitinates MYC in the nucleoplasm, leading to prevent MYC degradation by the proteasome: acts by specifically interacting with FBXW7 (FBW7alpha) in the nucleoplasm and counteracting ubiquitination of MYC by the SCF(FBXW7) complex. Deubiquitinates ZNF304, hence preventing ZNF304 degradation by the proteasome and leading to the activated KRAS-mediated promoter hypermethylation and transcriptional silencing of tumor suppressor genes (TSGs) in a subset of colorectal cancers (CRC) cells. This is Ubiquitin carboxyl-terminal hydrolase 28 (Usp28) from Mus musculus (Mouse).